The sequence spans 311 residues: Homeobox protein Hox-B1a (311 aa).

The segment at residues 217 to 276 (QNTIRTNFTTKQLTELEKEFHFSKYLTRARRVEIAATLELNETQVKIWFQNRRMKQKKRE) is a DNA-binding region (homeobox). Residues 267–311 (NRRMKQKKREKEGLAPASSTSSKDLEDQSDHSTSTSPEASPSPDS) are disordered. A compositionally biased stretch (low complexity) spans 298 to 311 (STSTSPEASPSPDS).

Belongs to the Antp homeobox family. Labial subfamily.

Its subcellular location is the nucleus. Its function is as follows. Sequence-specific transcription factor which is part of a developmental regulatory system that provides cells with specific positional identities on the anterior-posterior axis. The chain is Homeobox protein Hox-B1a (hoxb1a) from Danio rerio (Zebrafish).